A 336-amino-acid polypeptide reads, in one-letter code: Phospho-N-acetylmuramoyl-pentapeptide-transferase (336 aa).

Helical transmembrane passes span 1–21 (MLPL…SLFL), 56–76 (IPTA…LLLF), 78–98 (IQLW…ALGW), 124–144 (CLAA…FLSF), 148–168 (FLGI…FAIA), 184–204 (GLDG…LVVA), 210–230 (PWAF…LGFL), 239–259 (VFMG…CAVL), 264–284 (FLLL…IVQV), and 314–334 (VVRN…IAVF).

Belongs to the glycosyltransferase 4 family. MraY subfamily. Mg(2+) is required as a cofactor.

The protein resides in the cell inner membrane. The enzyme catalyses UDP-N-acetyl-alpha-D-muramoyl-L-alanyl-gamma-D-glutamyl-meso-2,6-diaminopimeloyl-D-alanyl-D-alanine + di-trans,octa-cis-undecaprenyl phosphate = di-trans,octa-cis-undecaprenyl diphospho-N-acetyl-alpha-D-muramoyl-L-alanyl-D-glutamyl-meso-2,6-diaminopimeloyl-D-alanyl-D-alanine + UMP. It participates in cell wall biogenesis; peptidoglycan biosynthesis. Functionally, catalyzes the initial step of the lipid cycle reactions in the biosynthesis of the cell wall peptidoglycan: transfers peptidoglycan precursor phospho-MurNAc-pentapeptide from UDP-MurNAc-pentapeptide onto the lipid carrier undecaprenyl phosphate, yielding undecaprenyl-pyrophosphoryl-MurNAc-pentapeptide, known as lipid I. This chain is Phospho-N-acetylmuramoyl-pentapeptide-transferase, found in Chlamydia trachomatis serovar L2b (strain UCH-1/proctitis).